The chain runs to 27 residues: Secretin (27 aa).

Leu-27 bears the Leucine amide mark.

This sequence belongs to the glucagon family.

The protein resides in the secreted. In terms of biological role, hormone involved in different processes, such as regulation of the pH of the duodenal content, food intake and water homeostasis. Exerts its biological effects by binding to secretin receptor (SCTR), a G-protein coupled receptor expressed in the basolateral domain of several cells. Acts as a key gastrointestinal hormone by regulating the pH of the duodenal content. Secreted by S cells of the duodenum in the crypts of Lieberkuehn and regulates the pH of the duodenum by (1) inhibiting the secretion of gastric acid from the parietal cells of the stomach and (2) stimulating the production of bicarbonate (NaHCO(3)) from the ductal cells of the pancreas. Production of bicarbonate is essential to neutralize the pH and ensure no damage is done to the small intestine by the gastric acid. In addition to regulating the pH of the duodenal content, plays a central role in diet induced thermogenesis: acts as a non-sympathetic brown fat (BAT) activator mediating prandial thermogenesis, which consequentially induces satiation. Mechanistically, secretin released by the gut after a meal binds to secretin receptor (SCTR) in brown adipocytes, activating brown fat thermogenesis by stimulating lipolysis, which is sensed in the brain and promotes satiation. Also able to stimulate lipolysis in white adipocytes. Also plays an important role in cellular osmoregulation: released into the systemic circulation in response to hyperosmolality and acts at different levels in the hypothalamus, pituitary and kidney to regulate water homeostasis. Also plays a role in the central nervous system, possibly by acting as a neuropeptide hormone: required for hippocampal synaptic function and neural progenitor cells maintenance. This chain is Secretin, found in Oryctolagus cuniculus (Rabbit).